The chain runs to 259 residues: MSTRADGRLDDELRAVVITRGFTEHPAGSVLIEFGHTKVMCTASPTEGVPRWRKGSGKGWLTAEYAMLPSATHTRSERESVKGRLSGRTQEISRLIGRSLRACIDLAALGENTIAVDCDVLQADGGTRTAAVTGAYVALADAVTYLSAAGRLLDPRPLSCAIAAVSVGVVDGRIRVDLSYEEDSRAEVDMNVIATDTGTLVEIQGTGEGATFPRSTLDKLLDMALGACDKLFVAQRDALALPYQGMSPEGPPPPKAFGS.

Residues R88 and 126 to 128 (GTR) contribute to the phosphate site.

This sequence belongs to the RNase PH family. In terms of assembly, homohexameric ring arranged as a trimer of dimers.

It carries out the reaction tRNA(n+1) + phosphate = tRNA(n) + a ribonucleoside 5'-diphosphate. In terms of biological role, phosphorolytic 3'-5' exoribonuclease that plays an important role in tRNA 3'-end maturation. Removes nucleotide residues following the 3'-CCA terminus of tRNAs; can also add nucleotides to the ends of RNA molecules by using nucleoside diphosphates as substrates, but this may not be physiologically important. Probably plays a role in initiation of 16S rRNA degradation (leading to ribosome degradation) during starvation. The protein is Ribonuclease PH of Mycobacterium leprae (strain Br4923).